The following is a 1084-amino-acid chain: AP-3 complex subunit beta-1 (1084 aa).

Positions 1–11 (MSSNSFAYNEQ) are enriched in polar residues. The segment at 1–26 (MSSNSFAYNEQSGGGEATELGQEATS) is disordered. 2 positions are modified to phosphoserine: S276 and S609. The tract at residues 663-800 (AGKAKKENPD…KEKKTKQERN (138 aa)) is disordered. Over residues 666-677 (AKKENPDKKFYS) the composition is skewed to basic and acidic residues. The span at 678–717 (ESEEEEDSSESSSDSESESGSESGEDEEDDRSGDSAEDSG) shows a compositional bias: acidic residues. Positions 718 to 729 (ESGSEPEAGKGR) are enriched in low complexity. Positions 738–753 (GRGDSKDVDKEKENSK) are enriched in basic and acidic residues. S742 carries the phosphoserine modification. The segment covering 754–767 (TSESSSGESSSIEE) has biased composition (low complexity). A compositionally biased stretch (acidic residues) spans 768 to 781 (SSSDSESESESESE). A compositionally biased stretch (basic and acidic residues) spans 782-800 (SESRKVTKEKEKKTKQERN).

Belongs to the adaptor complexes large subunit family. As to quaternary structure, adaptor protein complex 3 (AP-3) is a heterotetramer composed of two large adaptins (delta-type subunit AP3D1 and beta-type subunit AP3B1 or AP3B2), a medium adaptin (mu-type subunit AP3M1 or AP3M2) and a small adaptin (sigma-type subunit APS1 or AP3S2). AP-3 associates with the BLOC-1 complex. Interacts with KIF3A; interaction is direct; interaction is impaired by pyrophosphorylation of AP3B1. Phosphorylated on serine residues. Post-translationally, pyrophosphorylation by 5-diphosphoinositol pentakisphosphate (5-IP7) impairs interaction with KIF3A. Serine pyrophosphorylation is achieved by Mg(2+)-dependent, but enzyme independent transfer of a beta-phosphate from a inositol pyrophosphate to a pre-phosphorylated serine residue.

The protein localises to the cytoplasmic vesicle. It is found in the clathrin-coated vesicle membrane. Its subcellular location is the golgi apparatus. Functionally, subunit of non-clathrin- and clathrin-associated adaptor protein complex 3 (AP-3) that plays a role in protein sorting in the late-Golgi/trans-Golgi network (TGN) and/or endosomes. The AP complexes mediate both the recruitment of clathrin to membranes and the recognition of sorting signals within the cytosolic tails of transmembrane cargo molecules. AP-3 appears to be involved in the sorting of a subset of transmembrane proteins targeted to lysosomes and lysosome-related organelles. In concert with the BLOC-1 complex, AP-3 is required to target cargos into vesicles assembled at cell bodies for delivery into neurites and nerve terminals. This is AP-3 complex subunit beta-1 (AP3B1) from Bos taurus (Bovine).